The sequence spans 1893 residues: Endoribonuclease Dicer (1893 aa).

In terms of domain architecture, Helicase ATP-binding spans 41–217 (LLEAALDHNT…DLEEKIQKLE (177 aa)). 54–61 (LNSGSGKT) is an ATP binding site. The short motif at 165–168 (DECH) is the DECH box element. Positions 400 to 424 (VSWSDSEDDDDEDEEIEEKEKTETS) are disordered. Acidic residues predominate over residues 404–416 (DSEDDDDEDEEIE). The Helicase C-terminal domain occupies 424-593 (SFPSPFTNIL…SIDCGNTESE (170 aa)). A Dicer dsRNA-binding fold domain is found at 621–713 (AIGHINRYCA…MPVGKETVKY (93 aa)). The segment at 718–737 (DLHDEEETSVPGRPGSTKRR) is disordered. A PAZ domain is found at 886–1036 (KFVEDIEKSE…LVPELCAIHP (151 aa)). RNase III domains follow at residues 1249 to 1380 (TSDM…ETSG) and 1637 to 1795 (FENF…MDSG). The Mg(2+) site is built by E1293, D1371, E1374, E1676, D1781, and E1784. Residues 1820 to 1885 (VPRSPVRELL…ARRALRSLKA (66 aa)) form the DRBM domain.

Belongs to the helicase family. Dicer subfamily. In terms of assembly, component of the RISC loading complex (RLC), or micro-RNA (miRNA) loading complex (miRLC), which is composed of dicer1, ago2 and tarbp2; dicer1 and tarbp2 are required to process precursor miRNAs (pre-miRNAs) to mature miRNAs and then load them onto ago2. Note that the trimeric RLC/miRLC is also referred to as RISC. Mg(2+) serves as cofactor. Mn(2+) is required as a cofactor.

The protein resides in the cytoplasm. The enzyme catalyses Endonucleolytic cleavage to 5'-phosphomonoester.. Functionally, double-stranded RNA (dsRNA) endoribonuclease playing a central role in short dsRNA-mediated post-transcriptional gene silencing. Cleaves naturally occurring long dsRNAs and short hairpin pre-microRNAs (miRNA) into fragments of twenty-one to twenty-three nucleotides with 3' overhang of two nucleotides, producing respectively short interfering RNAs (siRNA) and mature microRNAs. SiRNAs and miRNAs serve as guide to direct the RNA-induced silencing complex (RISC) to complementary RNAs to degrade them or prevent their translation. Gene silencing mediated by siRNAs, also called RNA interference, controls the elimination of transcripts from mobile and repetitive DNA elements of the genome but also the degradation of exogenous RNA of viral origin for instance. The miRNA pathway on the other side is a mean to specifically regulate the expression of target genes. This is Endoribonuclease Dicer (dicer1) from Xenopus tropicalis (Western clawed frog).